A 146-amino-acid polypeptide reads, in one-letter code: ASFDPHEKQLIGDLWHKVDVAHCGGEALSRMLIVYPWKRRYFENFGDISNAQAIMHNEKVQAHGKKVLASFGEAVCHLDGIRAHFANLSKLHCEKLHVDPENFKLLGDIIIIVLAAHYPKDFGLECHAAYQKLVRQVAAALAAEYH.

Ala1 is modified (N-acetylalanine). The Globin domain occupies 2–146; that stretch reads SFDPHEKQLI…VAAALAAEYH (145 aa). Positions 63 and 92 each coordinate heme b.

This sequence belongs to the globin family. As to quaternary structure, heterotetramer of two alpha chains and two beta chains. Red blood cells.

Its function is as follows. Involved in oxygen transport from the lung to the various peripheral tissues. The polypeptide is Hemoglobin subunit beta (HBB) (Crocodylus niloticus (Nile crocodile)).